The primary structure comprises 908 residues: DNA (cytosine-5)-methyltransferase 3A (908 aa).

Positions 1-13 (MPSSGPGDTSISS) are enriched in polar residues. Disordered regions lie at residues 1–183 (MPSS…PMPR) and 226–281 (SQAS…PEYE). Residues 14–37 (LEREDDRKEGEEQEENRGKEERQE) show a composition bias toward basic and acidic residues. Over residues 44–54 (KVGRPGRKRKH) the composition is skewed to basic residues. Polar residues predominate over residues 69–80 (TTKSQPTAQDSG). Ser102 is subject to Phosphoserine. Low complexity predominate over residues 110 to 124 (GAPAEGEGTETPPEA). Position 120 is a phosphothreonine (Thr120). Lys158 participates in a covalent cross-link: Glycyl lysine isopeptide (Lys-Gly) (interchain with G-Cter in SUMO2). Arg167 carries the post-translational modification Omega-N-methylarginine. Residues 195-399 (SKRKRDEWLA…DTGKAVEVQN (205 aa)) form an interaction with DNMT1 and DNMT3B region. Ser239 and Ser251 each carry phosphoserine. Residues 242–256 (AVQQPTDPASPTVAT) show a composition bias toward polar residues. At Thr257 the chain carries Phosphothreonine. The region spanning 257–315 (TPEPVGADAGDKNATKAADDEPEYEDGRGFGIGELVWGKLRGFSWWPGRIVSWWMTGRS) is the PWWP domain. Over residues 265–275 (AGDKNATKAAD) the composition is skewed to basic and acidic residues. A phosphoserine mark is found at Ser386 and Ser389. Positions 443–462 (AYAPPPPAKKPRKSTTEKPK) are disordered. The 133-residue stretch at 478–610 (EVRQKCRNIE…LQMFFANNHD (133 aa)) folds into the ADD domain. A GATA-type; atypical zinc finger spans residues 489-519 (ICISCGSLNVTLEHPLFIGGMCQNCKNCFLE). Positions 490-582 (CISCGSLNVT…KEDPWNCYMC (93 aa)) are interaction with the PRC2/EED-EZH2 complex. The segment at 530–586 (QSYCTICCGGREVLMCGNNNCCRCFCVECVDLLVGPGAAQAAIKEDPWNCYMCGHKG) adopts a PHD-type; atypical zinc-finger fold. In terms of domain architecture, SAM-dependent MTase C5-type spans 630–908 (IRVLSLFDGI…APLKEYFACV (279 aa)). Residues 637–641 (DGIAT), Glu660, and 682–684 (DVR) contribute to the S-adenosyl-L-methionine site. The active site involves Cys706. Cys706 carries the post-translational modification S-methylcysteine; by autocatalysis. S-adenosyl-L-methionine is bound at residue 887 to 889 (RSW).

It belongs to the class I-like SAM-binding methyltransferase superfamily. C5-methyltransferase family. In terms of assembly, heterotetramer composed of 1 DNMT3A homodimer and 2 DNMT3L subunits (DNMT3L-DNMT3A-DNMT3A-DNMT3L). Interacts with DNMT1 and DNMT3B. Interacts with MPHOSPH8. Interacts with histone H3 that is not methylated at 'Lys-4' (H3K4). Binds the ZBTB18 transcriptional repressor. Interacts with SETDB1. Associates with HDAC1 through its ADD domain. Interacts with UHRF1. Interacts with the PRC2/EED-EZH2 complex. Interacts with UBC9, PIAS1 and PIAS2. Interacts with SPOCD1. Interacts with ZNF263; recruited to the SIX3 promoter along with other proteins involved in chromatin modification and transcriptional corepression where it contributes to transcriptional repression. Post-translationally, sumoylated; sumoylation disrupts the ability to interact with histone deacetylases (HDAC1 and HDAC2) and repress transcription. Auto-methylated at Cys-706: auto-methylation takes place in absence of DNA substrate and inactivates the DNA methyltransferase activity. Inactivation by auto-methylation may be used to inactivate unused DNA methyltransferases in the cell.

The protein resides in the nucleus. Its subcellular location is the chromosome. The protein localises to the cytoplasm. The catalysed reaction is a 2'-deoxycytidine in DNA + S-adenosyl-L-methionine = a 5-methyl-2'-deoxycytidine in DNA + S-adenosyl-L-homocysteine + H(+). The enzyme catalyses L-cysteinyl-[protein] + S-adenosyl-L-methionine = S-methyl-L-cysteinyl-[protein] + S-adenosyl-L-homocysteine + H(+). With respect to regulation, activated by binding to the regulatory factor DNMT3L. Auto-methylation at Cys-706 in absence of DNA inactivates the DNA methyltransferase activity. Functionally, required for genome-wide de novo methylation and is essential for the establishment of DNA methylation patterns during development. DNA methylation is coordinated with methylation of histones. It modifies DNA in a non-processive manner and also methylates non-CpG sites. May preferentially methylate DNA linker between 2 nucleosomal cores and is inhibited by histone H1. Plays a role in paternal and maternal imprinting. Required for methylation of most imprinted loci in germ cells. Acts as a transcriptional corepressor for ZBTB18. Recruited to trimethylated 'Lys-36' of histone H3 (H3K36me3) sites. Can actively repress transcription through the recruitment of HDAC activity. Also has weak auto-methylation activity on Cys-706 in absence of DNA. This is DNA (cytosine-5)-methyltransferase 3A (Dnmt3a) from Rattus norvegicus (Rat).